A 274-amino-acid polypeptide reads, in one-letter code: Dermonecrotic toxin SdSicTox-betaIIB2i (274 aa).

The active site involves His-5. Mg(2+)-binding residues include Glu-25 and Asp-27. The Nucleophile role is filled by His-41. Cystine bridges form between Cys-45/Cys-51 and Cys-47/Cys-190. Asp-85 is a binding site for Mg(2+).

It belongs to the arthropod phospholipase D family. Class II subfamily. The cofactor is Mg(2+). As to expression, expressed by the venom gland.

It is found in the secreted. It catalyses the reaction an N-(acyl)-sphingosylphosphocholine = an N-(acyl)-sphingosyl-1,3-cyclic phosphate + choline. It carries out the reaction an N-(acyl)-sphingosylphosphoethanolamine = an N-(acyl)-sphingosyl-1,3-cyclic phosphate + ethanolamine. The enzyme catalyses a 1-acyl-sn-glycero-3-phosphocholine = a 1-acyl-sn-glycero-2,3-cyclic phosphate + choline. The catalysed reaction is a 1-acyl-sn-glycero-3-phosphoethanolamine = a 1-acyl-sn-glycero-2,3-cyclic phosphate + ethanolamine. Its function is as follows. Dermonecrotic toxins cleave the phosphodiester linkage between the phosphate and headgroup of certain phospholipids (sphingolipid and lysolipid substrates), forming an alcohol (often choline) and a cyclic phosphate. This toxin acts on sphingomyelin (SM). It may also act on ceramide phosphoethanolamine (CPE), lysophosphatidylcholine (LPC) and lysophosphatidylethanolamine (LPE), but not on lysophosphatidylserine (LPS), and lysophosphatidylglycerol (LPG). It acts by transphosphatidylation, releasing exclusively cyclic phosphate products as second products. Induces dermonecrosis, hemolysis, increased vascular permeability, edema, inflammatory response, and platelet aggregation. The sequence is that of Dermonecrotic toxin SdSicTox-betaIIB2i from Sicarius cf. damarensis (strain GJB-2008) (Six-eyed sand spider).